A 203-amino-acid chain; its full sequence is RNA chaperone ProQ (203 aa).

The disordered stretch occupies residues 111 to 138; sequence KAKRQALAPKKPAKKVAPKRAPAVKKER.

Belongs to the ProQ family.

The protein localises to the cytoplasm. In terms of biological role, RNA chaperone with significant RNA binding, RNA strand exchange and RNA duplexing activities. This chain is RNA chaperone ProQ, found in Shewanella frigidimarina (strain NCIMB 400).